Here is a 152-residue protein sequence, read N- to C-terminus: Transcriptional regulator MraZ (152 aa).

2 consecutive SpoVT-AbrB domains span residues 5-52 and 81-124; these read ASAI…PIHE and AHEV…DEQA.

Belongs to the MraZ family. In terms of assembly, forms oligomers.

The protein resides in the cytoplasm. Its subcellular location is the nucleoid. In Shewanella putrefaciens (strain CN-32 / ATCC BAA-453), this protein is Transcriptional regulator MraZ.